Consider the following 62-residue polypeptide: Large ribosomal subunit protein uL30 (62 aa).

Belongs to the universal ribosomal protein uL30 family. In terms of assembly, part of the 50S ribosomal subunit.

This chain is Large ribosomal subunit protein uL30, found in Prosthecochloris aestuarii (strain DSM 271 / SK 413).